The following is a 501-amino-acid chain: Pre-mRNA-splicing factor 38B (501 aa).

The span at 1-11 shows a compositional bias: low complexity; the sequence is MAGSQQQQQQQ. Disordered stretches follow at residues 1–28 and 208–501; these read MAGSQQQQQQQAVSKPTGGKHGNNLPLW and DQHM…ADSP. Basic residues predominate over residues 243 to 273; the sequence is GDKRRSRTPRRSPSPRKSQNRSRSRSHHRER. Residues 281–302 are a coiled coil; sequence ELERERDRQRKEREGKDRDRDR. The span at 281–328 shows a compositional bias: basic and acidic residues; that stretch reads ELERERDRQRKEREGKDRDRDRDRDRERDRERDRDRRRSRTPDRNAER. Residues 329 to 341 show a composition bias toward basic residues; it reads RRSRSRERRRSRS. A compositionally biased stretch (basic and acidic residues) spans 342–408; the sequence is TSRDKRTERK…EEKKHREEKR (67 aa). Positions 409-435 are enriched in basic residues; the sequence is SKRSRSRSRDRKHKAERSSKKRSRSGS. Positions 437–447 are enriched in basic and acidic residues; that stretch reads SRQEAGEEKNR. Residues 448-468 are compositionally biased toward basic residues; that stretch reads KRERSHSKDRQHKRSRSKERS. Residues 469 to 491 show a composition bias toward basic and acidic residues; it reads HRRESSNERIHARQERPSSESGE. A compositionally biased stretch (polar residues) spans 492–501; sequence RTNSVRADSP.

This sequence belongs to the PRP38 family.

Its subcellular location is the nucleus. Its function is as follows. May be required for pre-mRNA splicing. The chain is Pre-mRNA-splicing factor 38B (prpf38b) from Danio rerio (Zebrafish).